The chain runs to 433 residues: Glutamate--tRNA ligase 1 (433 aa).

The 'HIGH' region motif lies at Pro7–Asn17. The 'KMSKS' region signature appears at Lys230–Arg234. Lys233 is a binding site for ATP.

It belongs to the class-I aminoacyl-tRNA synthetase family. Glutamate--tRNA ligase type 1 subfamily. Monomer.

It is found in the cytoplasm. The enzyme catalyses tRNA(Glu) + L-glutamate + ATP = L-glutamyl-tRNA(Glu) + AMP + diphosphate. Its function is as follows. Catalyzes the attachment of glutamate to tRNA(Glu) in a two-step reaction: glutamate is first activated by ATP to form Glu-AMP and then transferred to the acceptor end of tRNA(Glu). The sequence is that of Glutamate--tRNA ligase 1 from Neorickettsia sennetsu (strain ATCC VR-367 / Miyayama) (Ehrlichia sennetsu).